Here is a 37-residue protein sequence, read N- to C-terminus: Disintegrin morulustatin (37 aa).

3 disulfide bridges follow: Cys12/Cys16, Cys22/Cys36, and Cys24/Cys31.

This sequence belongs to the venom metalloproteinase (M12B) family. P-II subfamily. P-IIa sub-subfamily. As to expression, expressed by the venom gland.

Its subcellular location is the secreted. In terms of biological role, inhibits ADP-induced platelet aggregation in human whole blood in a concentration-dependent manner (IC(50)=89.5 nM). The chain is Disintegrin morulustatin from Crotalus morulus (Tamaulipan rock rattlesnake).